The following is a 98-amino-acid chain: Large ribosomal subunit protein bL28 (98 aa).

Belongs to the bacterial ribosomal protein bL28 family.

In Bartonella bacilliformis (strain ATCC 35685 / KC583 / Herrer 020/F12,63), this protein is Large ribosomal subunit protein bL28.